The sequence spans 882 residues: Alanine--tRNA ligase (882 aa).

Zn(2+)-binding residues include histidine 574, histidine 578, cysteine 682, and histidine 686. Residues 853 to 882 are disordered; it reads GGRGGGKGALAQGGGLDPRKAREALPGLLP. A compositionally biased stretch (gly residues) spans 854–868; that stretch reads GRGGGKGALAQGGGL.

Belongs to the class-II aminoacyl-tRNA synthetase family. Zn(2+) serves as cofactor.

The protein resides in the cytoplasm. It catalyses the reaction tRNA(Ala) + L-alanine + ATP = L-alanyl-tRNA(Ala) + AMP + diphosphate. Functionally, catalyzes the attachment of alanine to tRNA(Ala) in a two-step reaction: alanine is first activated by ATP to form Ala-AMP and then transferred to the acceptor end of tRNA(Ala). Also edits incorrectly charged Ser-tRNA(Ala) and Gly-tRNA(Ala) via its editing domain. In Thermus thermophilus (strain ATCC BAA-163 / DSM 7039 / HB27), this protein is Alanine--tRNA ligase.